The following is a 402-amino-acid chain: Probable tRNA sulfurtransferase (402 aa).

Positions 61-166 constitute a THUMP domain; that stretch reads EEIMKRISKV…SDAAYLYSRV (106 aa). ATP-binding positions include 184 to 185, 209 to 210, Arg-266, Gly-288, and Gln-297; these read ML and HF.

It belongs to the ThiI family.

It is found in the cytoplasm. The enzyme catalyses [ThiI sulfur-carrier protein]-S-sulfanyl-L-cysteine + a uridine in tRNA + 2 reduced [2Fe-2S]-[ferredoxin] + ATP + H(+) = [ThiI sulfur-carrier protein]-L-cysteine + a 4-thiouridine in tRNA + 2 oxidized [2Fe-2S]-[ferredoxin] + AMP + diphosphate. It carries out the reaction [ThiS sulfur-carrier protein]-C-terminal Gly-Gly-AMP + S-sulfanyl-L-cysteinyl-[cysteine desulfurase] + AH2 = [ThiS sulfur-carrier protein]-C-terminal-Gly-aminoethanethioate + L-cysteinyl-[cysteine desulfurase] + A + AMP + 2 H(+). It functions in the pathway cofactor biosynthesis; thiamine diphosphate biosynthesis. In terms of biological role, catalyzes the ATP-dependent transfer of a sulfur to tRNA to produce 4-thiouridine in position 8 of tRNAs, which functions as a near-UV photosensor. Also catalyzes the transfer of sulfur to the sulfur carrier protein ThiS, forming ThiS-thiocarboxylate. This is a step in the synthesis of thiazole, in the thiamine biosynthesis pathway. The sulfur is donated as persulfide by IscS. The polypeptide is Probable tRNA sulfurtransferase (Macrococcus caseolyticus (strain JCSC5402) (Macrococcoides caseolyticum)).